Here is a 580-residue protein sequence, read N- to C-terminus: Opioid growth factor receptor (580 aa).

Met-1 is modified (N-acetylmethionine). Positions 1–38 (MDDPDCDSTWEEESEEDGEDGQADDTTDEDTGDDDGDA) are enriched in acidic residues. Disordered stretches follow at residues 1 to 44 (MDDP…ARPS) and 285 to 390 (FKPQ…VSEV). Residues 257–286 (RRELVYFAWEHFKPRREFVWGPRDKLRRFK) carry the Bipartite nuclear localization signal motif. A compositionally biased stretch (basic and acidic residues) spans 300–310 (ADKDEGSRDPS). A phosphoserine mark is found at Ser-327, Ser-361, Ser-365, and Ser-403. The segment covering 352–374 (NQRDEAKSLSPKESKKRKLEGNR) has biased composition (basic and acidic residues). Residues 405 to 580 (ISQEPREAEP…IEASAEPPKP (176 aa)) are disordered. 8 repeat units span residues 467 to 475 (GPEDSNSQV), 476 to 484 (GAEDSKSQV), 485 to 493 (GPEDPNSQV), 494 to 502 (GLEDPNSQV), 503 to 511 (GPEDPNSQV), 512 to 520 (GPEDPNSQV), 521 to 529 (GPEDPNSQV), and 530 to 538 (GPEDPNSQV). Positions 467–538 (GPEDSNSQVG…VGPEDPNSQV (72 aa)) are 8 X approximate tandem repeats. Residues 489–538 (PNSQVGLEDPNSQVGPEDPNSQVGPEDPNSQVGPEDPNSQVGPEDPNSQV) show a composition bias toward polar residues. Residues Ser-548 and Ser-555 each carry the phosphoserine modification.

This sequence belongs to the opioid growth factor receptor family. In terms of tissue distribution, highly expressed in 6-day old cerebellum and brain. Lower expressed in adult cerebellum. The protein is detected in germinal cells of the cerebellum, in neurons of the deep cerebellar nuclei and in the glia in the medullary layer.

The protein resides in the cytoplasm. Its subcellular location is the perinuclear region. It localises to the nucleus. Its function is as follows. Receptor for opioid growth factor (OGF), also known as Met-enkephalin. Seems to be involved in growth regulation. In Rattus norvegicus (Rat), this protein is Opioid growth factor receptor (Ogfr).